The sequence spans 154 residues: Cyclin-dependent protein kinase inhibitor SMR14 (154 aa).

The interval 1-111 (MSKIKIFHLF…RPPRKPKAIP (111 aa)) is disordered. The segment covering 24 to 37 (SLLVPSKSDSLDSS) has biased composition (low complexity). The segment covering 74-83 (KWECKDEESP) has biased composition (basic and acidic residues).

Functionally, probable cyclin-dependent protein kinase (CDK) inhibitor that functions as a repressor of mitosis in the endoreduplication cell cycle. This is Cyclin-dependent protein kinase inhibitor SMR14 from Arabidopsis thaliana (Mouse-ear cress).